Here is a 132-residue protein sequence, read N- to C-terminus: Large ribosomal subunit protein uL14 (132 aa).

The protein belongs to the universal ribosomal protein uL14 family. In terms of assembly, part of the 50S ribosomal subunit. Forms a cluster with proteins L3 and L24e, part of which may contact the 16S rRNA in 2 intersubunit bridges.

Its function is as follows. Binds to 23S rRNA. Forms part of two intersubunit bridges in the 70S ribosome. This is Large ribosomal subunit protein uL14 from Methanobrevibacter smithii (strain ATCC 35061 / DSM 861 / OCM 144 / PS).